The chain runs to 264 residues: Proteasome subunit alpha type-4 (264 aa).

Belongs to the peptidase T1A family. The 26S proteasome consists of a 20S proteasome core and two 19S regulatory subunits. The 20S proteasome core is composed of 28 subunits that are arranged in four stacked rings, resulting in a barrel-shaped structure. The two end rings are each formed by seven alpha subunits, and the two central rings are each formed by seven beta subunits. The catalytic chamber with the active sites is on the inside of the barrel. Interacts with PI31.

It is found in the cytoplasm. It localises to the nucleus. Functionally, the proteasome is a multicatalytic proteinase complex which is characterized by its ability to cleave peptides with Arg, Phe, Tyr, Leu, and Glu adjacent to the leaving group at neutral or slightly basic pH. The proteasome has an ATP-dependent proteolytic activity. This is Proteasome subunit alpha type-4 (Prosalpha3) from Drosophila melanogaster (Fruit fly).